The following is a 222-amino-acid chain: Putative ankyrin repeat protein L36 (222 aa).

7 ANK repeats span residues 1-14 (MVKY…NVDA), 15-44 (QNSR…NIYA), 45-74 (NDNH…NIRA), 76-104 (EDSA…TNYE), 105-134 (YSDY…KITD), 136-161 (AMFM…SLPC), and 163-191 (SYSE…KINK).

This chain is Putative ankyrin repeat protein L36, found in Acanthamoeba polyphaga (Amoeba).